We begin with the raw amino-acid sequence, 133 residues long: Small ribosomal subunit protein uS11 (133 aa).

The protein belongs to the universal ribosomal protein uS11 family. Part of the 30S ribosomal subunit. Interacts with proteins S7 and S18. Binds to IF-3.

Located on the platform of the 30S subunit, it bridges several disparate RNA helices of the 16S rRNA. Forms part of the Shine-Dalgarno cleft in the 70S ribosome. This Burkholderia pseudomallei (strain 1106a) protein is Small ribosomal subunit protein uS11.